We begin with the raw amino-acid sequence, 131 residues long: ER membrane protein complex subunit 5 (131 aa).

At 1–3 (MAP) the chain is on the cytoplasmic side. The helical transmembrane segment at 4–22 (SLWKGLVGIGLFALAHAAF) threads the bilayer. Topologically, residues 23–43 (SAAQHRSYMRLTEKEDESLPI) are lumenal. Residues 44–63 (DIVLQTLLAFAVTCYGIVHI) traverse the membrane as a helical segment. Topologically, residues 64–131 (AGEFKDMDAT…KLRKLESLRR (68 aa)) are cytoplasmic. Ser120 is subject to Phosphoserine.

The protein belongs to the membrane magnesium transporter (TC 1.A.67) family. Component of the ER membrane protein complex (EMC).

Its subcellular location is the endoplasmic reticulum membrane. The protein localises to the golgi apparatus membrane. It is found in the early endosome membrane. Part of the endoplasmic reticulum membrane protein complex (EMC) that enables the energy-independent insertion into endoplasmic reticulum membranes of newly synthesized membrane proteins. Preferentially accommodates proteins with transmembrane domains that are weakly hydrophobic or contain destabilizing features such as charged and aromatic residues. Involved in the cotranslational insertion of multi-pass membrane proteins in which stop-transfer membrane-anchor sequences become ER membrane spanning helices. It is also required for the post-translational insertion of tail-anchored/TA proteins in endoplasmic reticulum membranes. By mediating the proper cotranslational insertion of N-terminal transmembrane domains in an N-exo topology, with translocated N-terminus in the lumen of the ER, controls the topology of multi-pass membrane proteins like the G protein-coupled receptors. By regulating the insertion of various proteins in membranes, it is indirectly involved in many cellular processes. May be involved in Mg(2+) transport. This is ER membrane protein complex subunit 5 from Homo sapiens (Human).